The primary structure comprises 442 residues: tRNA modification GTPase MnmE (442 aa).

Residues arginine 27, glutamate 84, and lysine 124 each contribute to the (6S)-5-formyl-5,6,7,8-tetrahydrofolate site. In terms of domain architecture, TrmE-type G spans 221-366; sequence GLHVVIVGAP…LLDALQAFAE (146 aa). Residues 231 to 236, 250 to 256, and 275 to 278 each bind GTP; these read NAGKSS, SEEAGTT, and DTAG. Mg(2+) contacts are provided by serine 235 and threonine 256. Lysine 442 provides a ligand contact to (6S)-5-formyl-5,6,7,8-tetrahydrofolate.

The protein belongs to the TRAFAC class TrmE-Era-EngA-EngB-Septin-like GTPase superfamily. TrmE GTPase family. Homodimer. Heterotetramer of two MnmE and two MnmG subunits. It depends on K(+) as a cofactor.

Its subcellular location is the cytoplasm. Exhibits a very high intrinsic GTPase hydrolysis rate. Involved in the addition of a carboxymethylaminomethyl (cmnm) group at the wobble position (U34) of certain tRNAs, forming tRNA-cmnm(5)s(2)U34. The sequence is that of tRNA modification GTPase MnmE from Brucella ovis (strain ATCC 25840 / 63/290 / NCTC 10512).